The sequence spans 175 residues: Mating-type protein ALPHA1 (175 aa).

The segment at residues 88–144 (SSKKYLNSFMAFRAYYSQFGSGVKQNVLSSLLAEEWHADKMQHGIWDYFAQQYNFIN) is a DNA-binding region (alpha box).

It belongs to the MATALPHA1 family. Binds DNA with a high specificity in complex with an MCM1 dimer. Interacts with STE12.

The protein localises to the nucleus. In terms of biological role, mating type proteins are sequence specific DNA-binding proteins that act as master switches in yeast differentiation by controlling gene expression in a cell type-specific fashion. Transcriptional coactivator that, in alpha-cells, binds cooperatively with MCM1 and STE12 to a DNA sequence termed the QP' element, to activate the transcription of alpha-specific genes. This is Mating-type protein ALPHA1 (MATALPHA1) from Saccharomyces cerevisiae (strain ATCC 204508 / S288c) (Baker's yeast).